The primary structure comprises 428 residues: MFDYQQPDARGHFGIYGGSFVAETLSHALDELNAAYERYRHDPEFIAEFRNELAHFVGRPSPVYHAARMSREVGGAQIYLKREDLNHTGAHKINNTIGQALLARRMGKPRVIAETGAGQHGVATATICARYGMECVVYMGSEDVKRQSPNVYRMNLLGARVVPVESGSKTLKDALNEAMRDWVTNVENTFYIIGTVAGPHPYPAMVRDFQRVIGDECLVQMPALAGRQPDAVVACVGGGSNAMGIFYPYIPHEGVRLIGVEAAGEGMESGKHSASLQRGSPGVLHGNRTYVLQDANGQITETHSVSAGLDYPGVGPEHAYLKDIGRAEYVGITDAEALQAFHYLCRAEGIIPALESSHAVAYAMKLAKTMRPDQHVLVNLSGRGDKDIGTVADLSGADFYCRPSCRGQSVKGGDPSVVEIQRKAGGVQ.

Lysine 92 bears the N6-(pyridoxal phosphate)lysine mark.

The protein belongs to the TrpB family. In terms of assembly, tetramer of two alpha and two beta chains. Pyridoxal 5'-phosphate serves as cofactor.

It carries out the reaction (1S,2R)-1-C-(indol-3-yl)glycerol 3-phosphate + L-serine = D-glyceraldehyde 3-phosphate + L-tryptophan + H2O. The protein operates within amino-acid biosynthesis; L-tryptophan biosynthesis; L-tryptophan from chorismate: step 5/5. In terms of biological role, the beta subunit is responsible for the synthesis of L-tryptophan from indole and L-serine. The polypeptide is Tryptophan synthase beta chain (Leptothrix cholodnii (strain ATCC 51168 / LMG 8142 / SP-6) (Leptothrix discophora (strain SP-6))).